A 221-amino-acid chain; its full sequence is UPF0758 protein HI_0952 (221 aa).

The MPN domain occupies Ile99–Leu221. Positions 170, 172, and 183 each coordinate Zn(2+). A JAMM motif motif is present at residues His170 to Asp183.

The protein belongs to the UPF0758 family.

In Haemophilus influenzae (strain ATCC 51907 / DSM 11121 / KW20 / Rd), this protein is UPF0758 protein HI_0952.